Reading from the N-terminus, the 355-residue chain is Chromosomal protein D1 (355 aa).

Methionine 1 is modified (N-acetylmethionine). Residues 1–355 form a disordered region; that stretch reads MEEVAVKKRG…NYNDSESVAA (355 aa). Positions 7 to 14 form a DNA-binding region, a.T hook 1; sequence KKRGRPSK. Serine 30 carries the post-translational modification Phosphoserine. 2 consecutive DNA-binding regions (a.T hook) follow at residues 34–41 and 60–67; these read KKRGRPAK and KIQNDEDP. Residues 64–77 show a composition bias toward acidic residues; the sequence is DEDPEDEGEEDGDG. 3 positions are modified to phosphoserine: serine 80, serine 88, and serine 89. Residues 94 to 101 constitute a DNA-binding region (a.T hook 4); sequence KGRGRPKS. Phosphoserine is present on residues serine 107, serine 109, and serine 112. Phosphothreonine is present on threonine 115. Serine 118 carries the post-translational modification Phosphoserine. Over residues 119-130 the composition is skewed to basic residues; the sequence is AKKRKAGRPKKH. A DNA-binding region (a.T hook 5) is located at residues 122–129; the sequence is RKAGRPKK. 2 positions are modified to phosphoserine; by CK2: serine 133 and serine 135. A compositionally biased stretch (acidic residues) spans 135–147; sequence SENEDDQDEDDDG. Serine 149, serine 150, serine 161, serine 164, and serine 170 each carry phosphoserine. Residues 155–162 constitute a DNA-binding region (a.T hook 6); sequence RPVGRPSA. Positions 174–181 form a DNA-binding region, a.T hook 7; it reads RGLGRPKK. Serine 186 carries the phosphoserine; by CK2 modification. A DNA-binding region (a.T hook 8) is located at residues 196 to 203; sequence KKRGRPPQ. Phosphoserine is present on serine 208. Positions 219–226 form a DNA-binding region, a.T hook 9; sequence RPRGRPKA. Over residues 237–247 the composition is skewed to acidic residues; the sequence is NDDDQDDENSG. A phosphoserine mark is found at serine 246, serine 252, and serine 253. DNA-binding regions (a.T hook) lie at residues 262 to 269 and 281 to 288; these read KKRGRPSL and KPRSRPAK. Residues serine 299 and serine 307 each carry the phosphoserine modification. Over residues 307–318 the composition is skewed to basic and acidic residues; sequence SKKESNDEDRAV. Serine 311 is modified (phosphoserine; by CK2). Position 321 is a phosphothreonine (threonine 321). Serine 332 is subject to Phosphoserine; by CK2. The segment covering 345–355 has biased composition (polar residues); it reads DNYNDSESVAA.

It is found in the nucleus. It localises to the chromosome. Functionally, this satellite DNA-associated protein is a double-stranded DNA binding protein specific for tracts of pure at DNA. It may play a role in organizing the higher-order structure of euchromatin as well as heterochromatin. This chain is Chromosomal protein D1 (D1), found in Drosophila melanogaster (Fruit fly).